Here is a 193-residue protein sequence, read N- to C-terminus: ATP-dependent protease subunit HslV (193 aa).

Thr-12 is a catalytic residue. Residues Ala-167, Cys-170, and Thr-173 each coordinate Na(+).

This sequence belongs to the peptidase T1B family. HslV subfamily. As to quaternary structure, a double ring-shaped homohexamer of HslV is capped on each side by a ring-shaped HslU homohexamer. The assembly of the HslU/HslV complex is dependent on binding of ATP.

Its subcellular location is the cytoplasm. The catalysed reaction is ATP-dependent cleavage of peptide bonds with broad specificity.. Its activity is regulated as follows. Allosterically activated by HslU binding. Functionally, protease subunit of a proteasome-like degradation complex believed to be a general protein degrading machinery. The protein is ATP-dependent protease subunit HslV of Bartonella henselae (strain ATCC 49882 / DSM 28221 / CCUG 30454 / Houston 1) (Rochalimaea henselae).